Here is a 315-residue protein sequence, read N- to C-terminus: Peroxidase 1 (315 aa).

The signal sequence occupies residues M1–A21. Q22 carries the post-translational modification Pyrrolidone carboxylic acid. Intrachain disulfides connect C32–C107, C65–C70, C113–C310, and C193–C219. Residue H63 is the Proton acceptor of the active site. Ca(2+) is bound by residues D64, V67, G69, D71, and S73. P155 provides a ligand contact to substrate. A glycan (N-linked (GlcNAc...) asparagine) is linked at N158. H186 serves as a coordination point for heme b. T187 is a Ca(2+) binding site. 3 residues coordinate Ca(2+): D234, T237, and D242. N265 is a glycosylation site (N-linked (GlcNAc...) asparagine).

It belongs to the peroxidase family. Classical plant (class III) peroxidase subfamily. Requires Ca(2+) as cofactor. Heme b is required as a cofactor.

The protein localises to the secreted. The catalysed reaction is 2 a phenolic donor + H2O2 = 2 a phenolic radical donor + 2 H2O. Removal of H(2)O(2), oxidation of toxic reductants, biosynthesis and degradation of lignin, suberization, auxin catabolism, response to environmental stresses such as wounding, pathogen attack and oxidative stress. These functions might be dependent on each isozyme/isoform in each plant tissue. Functionally, involved in defense response to powdery meldew fungus. The chain is Peroxidase 1 from Hordeum vulgare (Barley).